Consider the following 369-residue polypeptide: MHRGRFATLVIVALAVTMTAPAGALAPQPPAQHADADRACSFPVTEPDASNTAITLDSEPERVVTLNPSAAQTMWELGDRDAVVGVSQFGTYLPTASQRTVVSGGQPSQTNVEAVVGLDPDLVLAPNTVRNTTVTRLRSAGITVFQFRAATSIDGVVEKTATIGRLTGNCAAAAATTAEMRDRVAAIADAVPDTDSARPRVYYHLGDGYTAGPNTFIGAAIEAAGGHNIAADVNTTSSYPQLSEEVIVSQDPDVVVTGVSADRLDATASALVAPSSVVRNTTAYATGNVVAVNTNHINQPAPRIVEPMARMANAFHNTTINTTLDAQPSATTTATSTAPPTDAADGTAPGFGVAAAVCALAGAALVARR.

The N-terminal stretch at methionine 1–alanine 24 is a signal peptide. The Fe/B12 periplasmic-binding domain maps to arginine 62–threonine 319. The segment at threonine 322–alanine 343 is disordered. Residues proline 328–alanine 343 are compositionally biased toward low complexity.

As to quaternary structure, the complex is composed of two ATP-binding proteins (BtuD), two transmembrane proteins (BtuC) and a solute-binding protein (BtuF).

Functionally, required for corrinoid utilization. Probably part of the ABC transporter complex BtuCDF involved in cobalamin (vitamin B12) import. Probably binds cobalamin and delivers it to the surface of BtuC. This chain is Cobalamin-binding protein (btuF), found in Halobacterium salinarum (strain ATCC 29341 / DSM 671 / R1).